A 349-amino-acid polypeptide reads, in one-letter code: Putative transport protein YhhT (349 aa).

Over 1-10 the chain is Cytoplasmic; that stretch reads METPQPDKTG. Residues 11 to 31 form a helical membrane-spanning segment; that stretch reads MHILLKLASLVVILAGIHAAA. Residue aspartate 32 is a topological domain, periplasmic. The chain crosses the membrane as a helical span at residues 33–53; that stretch reads IIVQLLLALFFAIVLNPLVTW. The Cytoplasmic segment spans residues 54–62; the sequence is FIRRGVQRP. Residues 63 to 83 form a helical membrane-spanning segment; the sequence is VAITIVVVVMLIALTALVGVL. Over 84 to 142 the chain is Periplasmic; the sequence is AASFNEFISMLPKFNKELTRKLFKLQEMLPFLNLHMSPERMLQRMDSEKVVTFTTALMT. The chain crosses the membrane as a helical span at residues 143–163; that stretch reads GLSGAMASVLLLVMTVVFMLF. The Cytoplasmic segment spans residues 164-208; the sequence is EVRHVPYKMRFALNNPQIHIAGLHRALKGVSHYLALKTLLSLWTG. A helical membrane pass occupies residues 209-229; sequence VIVWLGLELMGVQFALMWAVL. At 230–234 the chain is on the periplasmic side; that stretch reads AFLLN. Residues 235–255 form a helical membrane-spanning segment; the sequence is YVPNIGAVISAVPPMIQVLLF. At 256 to 257 the chain is on the cytoplasmic side; it reads NG. The chain crosses the membrane as a helical span at residues 258–278; that stretch reads VYECILVGALFLVVHMVIGNI. The Periplasmic portion of the chain corresponds to 279–292; it reads LEPRMMGHRLGMST. A helical transmembrane segment spans residues 293–313; the sequence is MVVFLSLLIWGWLLGPVGMLL. At 314–349 the chain is on the cytoplasmic side; it reads SVPLTSVCKIWMETTKGGSKLAILLGPGRPKSRLPG.

It belongs to the autoinducer-2 exporter (AI-2E) (TC 2.A.86) family.

It localises to the cell inner membrane. This Escherichia coli O157:H7 protein is Putative transport protein YhhT (yhhT).